The chain runs to 323 residues: Ribonuclease Z (323 aa).

Zn(2+)-binding residues include His62, His64, Asp66, His67, His144, Asp215, and His273. Residue Asp66 is the Proton acceptor of the active site.

It belongs to the RNase Z family. As to quaternary structure, homodimer. Zn(2+) is required as a cofactor.

It catalyses the reaction Endonucleolytic cleavage of RNA, removing extra 3' nucleotides from tRNA precursor, generating 3' termini of tRNAs. A 3'-hydroxy group is left at the tRNA terminus and a 5'-phosphoryl group is left at the trailer molecule.. Functionally, zinc phosphodiesterase, which displays some tRNA 3'-processing endonuclease activity. Probably involved in tRNA maturation, by removing a 3'-trailer from precursor tRNA. This is Ribonuclease Z from Synechococcus sp. (strain WH7803).